The sequence spans 95 residues: Co-chaperonin GroES (95 aa).

It belongs to the GroES chaperonin family. Heptamer of 7 subunits arranged in a ring. Interacts with the chaperonin GroEL.

The protein localises to the cytoplasm. Functionally, together with the chaperonin GroEL, plays an essential role in assisting protein folding. The GroEL-GroES system forms a nano-cage that allows encapsulation of the non-native substrate proteins and provides a physical environment optimized to promote and accelerate protein folding. GroES binds to the apical surface of the GroEL ring, thereby capping the opening of the GroEL channel. The polypeptide is Co-chaperonin GroES (Chlorobium phaeovibrioides (strain DSM 265 / 1930) (Prosthecochloris vibrioformis (strain DSM 265))).